Consider the following 211-residue polypeptide: Histidine biosynthesis bifunctional protein HisIE (211 aa).

Positions 1–107 (MNKLIDFSKG…FNSEIESRFK (107 aa)) are phosphoribosyl-AMP cyclohydrolase. The interval 108–211 (IQALAQTIHQ…KGERKEVREW (104 aa)) is phosphoribosyl-ATP pyrophosphohydrolase.

It in the N-terminal section; belongs to the PRA-CH family. In the C-terminal section; belongs to the PRA-PH family.

Its subcellular location is the cytoplasm. It carries out the reaction 1-(5-phospho-beta-D-ribosyl)-ATP + H2O = 1-(5-phospho-beta-D-ribosyl)-5'-AMP + diphosphate + H(+). The enzyme catalyses 1-(5-phospho-beta-D-ribosyl)-5'-AMP + H2O = 1-(5-phospho-beta-D-ribosyl)-5-[(5-phospho-beta-D-ribosylamino)methylideneamino]imidazole-4-carboxamide. The protein operates within amino-acid biosynthesis; L-histidine biosynthesis; L-histidine from 5-phospho-alpha-D-ribose 1-diphosphate: step 2/9. It functions in the pathway amino-acid biosynthesis; L-histidine biosynthesis; L-histidine from 5-phospho-alpha-D-ribose 1-diphosphate: step 3/9. The protein is Histidine biosynthesis bifunctional protein HisIE of Staphylococcus epidermidis (strain ATCC 35984 / DSM 28319 / BCRC 17069 / CCUG 31568 / BM 3577 / RP62A).